The sequence spans 382 residues: Putative UDP-sugar transporter DDB_G0278631 (382 aa).

The next 7 helical transmembrane spans lie at Phe117–Ile137, Met183–Leu203, Ile211–Ser231, Ser234–Val254, Tyr264–Val284, Phe302–Phe322, and Ile354–Tyr374.

Belongs to the TPT transporter family. SLC35D subfamily.

The protein resides in the membrane. May be nvolved in the import of UDP-sugars. This is Putative UDP-sugar transporter DDB_G0278631 from Dictyostelium discoideum (Social amoeba).